A 281-amino-acid polypeptide reads, in one-letter code: MAQKIVRVGDIQIGNDLPFVLFGGMNVLESRDLAMQVCEEYVRVTEKLGIPYVFKASFDKANRSSIHSFRGPGLEEGMKIFEEIKKTFKVPVITDVHEPHQAQPVAEVCDIIQLPAFLSRQTDLVVAMARTNAVINIKKAQFLAPQEMKHILTKCEEAGNDRLILCERGSSFGYNNLVVDMLGFGIMKQFEYPVFFDVTHALQMPGGRADSAGGRRAQVTDLAKAGLSQKLAGLFLEAHPDPEHAKCDGPCALRLNKLEAFLSQLKQLDELIKSFPAIETA.

This sequence belongs to the KdsA family.

The protein resides in the cytoplasm. It carries out the reaction D-arabinose 5-phosphate + phosphoenolpyruvate + H2O = 3-deoxy-alpha-D-manno-2-octulosonate-8-phosphate + phosphate. Its pathway is carbohydrate biosynthesis; 3-deoxy-D-manno-octulosonate biosynthesis; 3-deoxy-D-manno-octulosonate from D-ribulose 5-phosphate: step 2/3. It functions in the pathway bacterial outer membrane biogenesis; lipopolysaccharide biosynthesis. This chain is 2-dehydro-3-deoxyphosphooctonate aldolase, found in Pseudomonas paraeruginosa (strain DSM 24068 / PA7) (Pseudomonas aeruginosa (strain PA7)).